Here is a 51-residue protein sequence, read N- to C-terminus: Large ribosomal subunit protein bL33 (51 aa).

It belongs to the bacterial ribosomal protein bL33 family. In terms of assembly, part of the 50S ribosomal subunit. Cross-links to the P and E site tRNAs.

The polypeptide is Large ribosomal subunit protein bL33 (Pseudomonas aeruginosa (strain ATCC 15692 / DSM 22644 / CIP 104116 / JCM 14847 / LMG 12228 / 1C / PRS 101 / PAO1)).